The following is a 168-amino-acid chain: Small ribosomal subunit protein uS9 (168 aa).

Over residues 1–15 the composition is skewed to acidic residues; sequence MAQNEETTEAVEAEE. Residues 1–34 form a disordered region; sequence MAQNEETTEAVEAEETLTSYTSESGAAEAAAPKK.

The protein belongs to the universal ribosomal protein uS9 family.

In Arthrobacter sp. (strain FB24), this protein is Small ribosomal subunit protein uS9.